Consider the following 331-residue polypeptide: Ketol-acid reductoisomerase (NADP(+)) (331 aa).

In terms of domain architecture, KARI N-terminal Rossmann spans 1–181; sequence MKMYYDADAD…GGTRAGVIET (181 aa). NADP(+) contacts are provided by residues 24–27, arginine 47, serine 50, and 82–85; these read YGSQ and DEKQ. Histidine 107 is an active-site residue. Position 133 (glycine 133) interacts with NADP(+). The KARI C-terminal knotted domain occupies 182-327; that stretch reads TFREETETDL…KKLRAMMPWL (146 aa). Residues aspartate 190, glutamate 194, glutamate 226, and glutamate 230 each contribute to the Mg(2+) site. A substrate-binding site is contributed by serine 251.

The protein belongs to the ketol-acid reductoisomerase family. The cofactor is Mg(2+).

It catalyses the reaction (2R)-2,3-dihydroxy-3-methylbutanoate + NADP(+) = (2S)-2-acetolactate + NADPH + H(+). It carries out the reaction (2R,3R)-2,3-dihydroxy-3-methylpentanoate + NADP(+) = (S)-2-ethyl-2-hydroxy-3-oxobutanoate + NADPH + H(+). Its pathway is amino-acid biosynthesis; L-isoleucine biosynthesis; L-isoleucine from 2-oxobutanoate: step 2/4. It functions in the pathway amino-acid biosynthesis; L-valine biosynthesis; L-valine from pyruvate: step 2/4. Its function is as follows. Involved in the biosynthesis of branched-chain amino acids (BCAA). Catalyzes an alkyl-migration followed by a ketol-acid reduction of (S)-2-acetolactate (S2AL) to yield (R)-2,3-dihydroxy-isovalerate. In the isomerase reaction, S2AL is rearranged via a Mg-dependent methyl migration to produce 3-hydroxy-3-methyl-2-ketobutyrate (HMKB). In the reductase reaction, this 2-ketoacid undergoes a metal-dependent reduction by NADPH to yield (R)-2,3-dihydroxy-isovalerate. The protein is Ketol-acid reductoisomerase (NADP(+)) of Heliobacterium modesticaldum (strain ATCC 51547 / Ice1).